A 198-amino-acid polypeptide reads, in one-letter code: NAD(P)H dehydrogenase (quinone) (198 aa).

The region spanning 4-189 is the Flavodoxin-like domain; the sequence is VLVLYYSMYG…SIARYQGEYV (186 aa). FMN contacts are provided by residues 10-15 and 78-80; these read SMYGHI and TRF. Residue Tyr-12 participates in NAD(+) binding. Substrate is bound at residue Trp-98. FMN is bound by residues 113–118 and His-133; that span reads STGTGG.

It belongs to the WrbA family. Requires FMN as cofactor.

It carries out the reaction a quinone + NADH + H(+) = a quinol + NAD(+). The enzyme catalyses a quinone + NADPH + H(+) = a quinol + NADP(+). The protein is NAD(P)H dehydrogenase (quinone) of Escherichia coli (strain SE11).